A 420-amino-acid chain; its full sequence is Nucleobindin-2 (420 aa).

The signal sequence occupies residues 1-24; that stretch reads MRWRTIQARYCFLLVPCVLTALEA. Residues 171–223 mediate DNA binding; the sequence is RTRHEEFKKYEMMKEHERREYLKTLSEEKRKEEEAKFAEMKRKHEDHPKVNHP. Residues 194–225 are disordered; it reads TLSEEKRKEEEAKFAEMKRKHEDHPKVNHPGS. Positions 213-420 are binds to necdin; the sequence is KHEDHPKVNH…AGELKFEPHT (208 aa). EF-hand domains are found at residues 241-276 and 293-328; these read PNDF…ELDK and ERLR…KEFL. Ca(2+) is bound by residues Asp254, Asn256, Asp258, Glu265, Asp306, Asn308, Asp310, and Glu317. The GBA signature appears at 304–334; that stretch reads EIDNNKDRLVTLEEFLRATEKKEFLEPDSWE. Ser332 is modified (phosphoserine). Residues 366–386 show a composition bias toward basic and acidic residues; that stretch reads DELQKQKEELQRQHDHLEAQK. Residues 366-420 are disordered; that stretch reads DELQKQKEELQRQHDHLEAQKQEYQQAVQQLEQKKFQQGIAPSGPAGELKFEPHT. The span at 387–396 shows a compositional bias: low complexity; that stretch reads QEYQQAVQQL.

Belongs to the nucleobindin family. As to quaternary structure, interacts (via GBA motif) with guanine nucleotide-binding protein G(i) alpha subunit GNAI3. Preferentially interacts with inactive rather than active GNAI3. Interaction with GNAI3 is inhibited when NUCB2 binds calcium, probably due to a conformational change which renders the GBA motif inaccessible. Binds to the postmitotic growth suppressor NDN; coexpression abolishes NUCB2 secretion. Interacts with MC4R.

It is found in the golgi apparatus. The protein localises to the endoplasmic reticulum. The protein resides in the nucleus envelope. It localises to the membrane. Its subcellular location is the cytoplasm. It is found in the secreted. Its function is as follows. Calcium-binding protein which may have a role in calcium homeostasis. Acts as a non-receptor guanine nucleotide exchange factor which binds to and activates guanine nucleotide-binding protein (G-protein) alpha subunit GNAI3. In terms of biological role, anorexigenic peptide, seems to play an important role in hypothalamic pathways regulating food intake and energy homeostasis, acting in a leptin-independent manner. May also exert hypertensive roles and modulate blood pressure through directly acting on peripheral arterial resistance. In intestinal epithelial cells, plays a role in the inhibition of hepatic glucose production via MC4R receptor leading to increased cyclic adenosine monophosphate (cAMP) levels and glucagon-like peptide 1 (GLP-1) secretion. The chain is Nucleobindin-2 (Nucb2) from Rattus norvegicus (Rat).